The following is a 243-amino-acid chain: Small ribosomal subunit protein uS3 (243 aa).

In terms of domain architecture, KH type-2 spans 39–107 (MRKFVMSELK…ETHLNIVEVR (69 aa)). A disordered region spans residues 214–243 (ASERRAMEGDAQGPASRDRDRDRDRRRDNA). Residues 229–243 (SRDRDRDRDRRRDNA) show a composition bias toward basic and acidic residues.

This sequence belongs to the universal ribosomal protein uS3 family. In terms of assembly, part of the 30S ribosomal subunit. Forms a tight complex with proteins S10 and S14.

Functionally, binds the lower part of the 30S subunit head. Binds mRNA in the 70S ribosome, positioning it for translation. This Rhizobium johnstonii (strain DSM 114642 / LMG 32736 / 3841) (Rhizobium leguminosarum bv. viciae) protein is Small ribosomal subunit protein uS3.